Here is a 254-residue protein sequence, read N- to C-terminus: Very-long-chain (3R)-3-hydroxyacyl-CoA dehydratase 2 (254 aa).

A2 is modified (N-acetylalanine). Topologically, residues 2–41 (AAVAATAAAKGNGGGGGRAGAGDASGTRKKKGPGPLATAY) are cytoplasmic. The interval 11–33 (KGNGGGGGRAGAGDASGTRKKKG) is disordered. Over residues 12-21 (GNGGGGGRAG) the composition is skewed to gly residues. A helical membrane pass occupies residues 42–60 (LVIYNVVMTAGWLVIAVGL). The Lumenal portion of the chain corresponds to 61 to 79 (VRAYLAKGSYHSLYYSIEK). A helical transmembrane segment spans residues 80-97 (PLKFFQTGALLEILHCAI). The Cytoplasmic segment spans residues 98–107 (GIVPSSVVLT). The helical transmembrane segment at 108–125 (SFQVMSRVFLIWAVTHSV) threads the bilayer. Residues 126-130 (KEVQS) lie on the Lumenal side of the membrane. A helical transmembrane segment spans residues 131–146 (EDSVLLFVIAWTITEI). Topologically, residues 147 to 169 (IRYSFYTFSLLNHLPYLIKWARY) are cytoplasmic. The helical transmembrane segment at 170–187 (TLFIVLYPMGVSGELLTI) threads the bilayer. Catalysis depends on residues Y176 and E183. Over 188 to 217 (YAALPFVRQAGLYSISLPNKYNFSFDYYAF) the chain is Lumenal. The tract at residues 198 to 214 (GLYSISLPNKYNFSFDY) is may be involved in interaction with TECR. The N-linked (GlcNAc...) asparagine glycan is linked to N209. A helical membrane pass occupies residues 218-235 (LILIMISYIPIFPQLYFH). Residues 236–254 (MIHQRRKILSHTEEHKKFE) lie on the Cytoplasmic side of the membrane.

This sequence belongs to the very long-chain fatty acids dehydratase HACD family. In terms of assembly, may interact with enzymes of the ELO family (including ELOVL1); with those enzymes that mediate condensation, the first of the four steps of the reaction cycle responsible for fatty acids elongation, may be part of a larger fatty acids elongase complex. Interacts with BCAP31. Interacts (via the third lumenal loop) with TECR. In terms of tissue distribution, highly expressed in testis, spleen, prostate, colon and heart, followed by moderate expression in thymus, ovary, small intestine, peripheral blood leukocytes, liver, skeletal muscle and pancreas. Weakly detected in kidney, placenta, brain and lung.

The protein localises to the endoplasmic reticulum membrane. It carries out the reaction a very-long-chain (3R)-3-hydroxyacyl-CoA = a very-long-chain (2E)-enoyl-CoA + H2O. It catalyses the reaction (3R)-hydroxyhexadecanoyl-CoA = (2E)-hexadecenoyl-CoA + H2O. The enzyme catalyses (3R)-hydroxyoctadecanoyl-CoA = (2E)-octadecenoyl-CoA + H2O. The catalysed reaction is (3R)-hydroxyeicosanoyl-CoA = (2E)-eicosenoyl-CoA + H2O. It carries out the reaction (3R)-hydroxydocosanoyl-CoA = (2E)-docosenoyl-CoA + H2O. It catalyses the reaction (3R)-hydroxytetracosanoyl-CoA = (2E)-tetracosenoyl-CoA + H2O. The enzyme catalyses (3R)-hydroxyhexacosanoyl-CoA = (2E)-hexacosenoyl-CoA + H2O. It functions in the pathway lipid metabolism; fatty acid biosynthesis. Functionally, catalyzes the third of the very long-chain fatty acids (VLCFA) elongation four-step cycle (condensation, reduction, dehydration, and reduction). This endoplasmic reticulum-elongation process is characterized by the addition of two carbons to the lipid chain through each cycle. This enzyme catalyzes the dehydration of the 3-hydroxyacyl-CoA intermediate into trans-2,3-enoyl-CoA, within each cycle of elongation. Therefore, it participates in the production of various VLCFAs involved in multiple biological processes as precursors of membrane lipids and lipid mediators. This is Very-long-chain (3R)-3-hydroxyacyl-CoA dehydratase 2 from Homo sapiens (Human).